Consider the following 219-residue polypeptide: Small ribosomal subunit protein uS3c (219 aa).

One can recognise a KH type-2 domain in the interval Ile43–Glu118.

The protein belongs to the universal ribosomal protein uS3 family. As to quaternary structure, part of the 30S ribosomal subunit.

The protein resides in the plastid. This chain is Small ribosomal subunit protein uS3c (rps3), found in Cuscuta exaltata (Tall dodder).